Consider the following 267-residue polypeptide: 4-hydroxy-tetrahydrodipicolinate reductase (267 aa).

Residues 8 to 13 and glutamate 34 contribute to the NAD(+) site; that span reads GAAGRM. An NADP(+)-binding site is contributed by arginine 35. NAD(+) is bound by residues 98 to 100 and 122 to 125; these read GST and APNM. Catalysis depends on histidine 155, which acts as the Proton donor/acceptor. Histidine 156 serves as a coordination point for (S)-2,3,4,5-tetrahydrodipicolinate. The Proton donor role is filled by lysine 159. Residue 165 to 166 participates in (S)-2,3,4,5-tetrahydrodipicolinate binding; it reads GT.

This sequence belongs to the DapB family.

It is found in the cytoplasm. The enzyme catalyses (S)-2,3,4,5-tetrahydrodipicolinate + NAD(+) + H2O = (2S,4S)-4-hydroxy-2,3,4,5-tetrahydrodipicolinate + NADH + H(+). The catalysed reaction is (S)-2,3,4,5-tetrahydrodipicolinate + NADP(+) + H2O = (2S,4S)-4-hydroxy-2,3,4,5-tetrahydrodipicolinate + NADPH + H(+). The protein operates within amino-acid biosynthesis; L-lysine biosynthesis via DAP pathway; (S)-tetrahydrodipicolinate from L-aspartate: step 4/4. Its function is as follows. Catalyzes the conversion of 4-hydroxy-tetrahydrodipicolinate (HTPA) to tetrahydrodipicolinate. This is 4-hydroxy-tetrahydrodipicolinate reductase from Geobacter sp. (strain M21).